Here is a 1954-residue protein sequence, read N- to C-terminus: Protein abnormal spindle (1954 aa).

Residues Val-134–Ala-155 form a disordered region. 2 positions are modified to phosphoserine: Ser-151 and Ser-360. A Phosphothreonine modification is found at Thr-364. Phosphoserine is present on residues Ser-388, Ser-390, Ser-395, Ser-398, Ser-491, Ser-495, Ser-497, Ser-501, Ser-504, and Ser-514. Residues Lys-476–Ala-548 form a disordered region. A compositionally biased stretch (polar residues) spans Asp-498–Arg-507. Positions Arg-528–Ala-548 are enriched in low complexity. One can recognise a Calponin-homology (CH) domain in the interval Lys-836–Arg-968. 3 IQ domains span residues Arg-1004 to Gln-1033, Thr-1386 to Gln-1415, and Gln-1467 to Gln-1496. Residues Arg-1614 to Arg-1641 are a coiled coil. 2 IQ domains span residues Leu-1656–Leu-1687 and Gln-1690–Arg-1721.

Its subcellular location is the cytoplasm. The protein localises to the nucleus. The protein resides in the cytoskeleton. It is found in the spindle. It localises to the microtubule organizing center. Its subcellular location is the perinuclear region. Its function is as follows. Required to maintain the structure of the centrosomal microtubule organizing center (MTOC) during mitosis. May have a preferential role in regulating neurogenesis. Required for germ cell mitosis and oocyte differentiation. The sequence is that of Protein abnormal spindle from Drosophila melanogaster (Fruit fly).